We begin with the raw amino-acid sequence, 197 residues long: CASP-like protein 0U1 (197 aa).

Topologically, residues M1–K13 are cytoplasmic. Residues F14–Q34 form a helical membrane-spanning segment. Topologically, residues R35 to K63 are extracellular. The chain crosses the membrane as a helical span at residues F64 to L84. Over L85 to T99 the chain is Cytoplasmic. Residues V100 to I120 form a helical membrane-spanning segment. The Extracellular segment spans residues V121–K135. Residues A136 to Y156 traverse the membrane as a helical segment. The Cytoplasmic portion of the chain corresponds to K157 to A197. Residues V178–A197 form a disordered region. The segment covering S180 to A197 has biased composition (low complexity).

The protein belongs to the Casparian strip membrane proteins (CASP) family. As to quaternary structure, homodimer and heterodimers.

It is found in the cell membrane. The sequence is that of CASP-like protein 0U1 from Micromonas commoda (strain RCC299 / NOUM17 / CCMP2709) (Picoplanktonic green alga).